The sequence spans 358 residues: MQKNDDLLRERRKDEHVALGVKQNEQLAPSSLDDIQLIGTSIPRYNVKDIDLTTTIFGVNVSLPFYINAMTGGSRHTKKINADLAEIAREVAIPMAVGSQSAALKNSSLMDTYQIVREVNPSGIIMANVSPEVAVQDGLRAIEMLEANALQIHINPAQELVMQEGDRSFSHWLARIEEYVKRSPVPIIVKEVGFGMTRETVKTLREVGVETVDLAGKGGTNFAQIENDRRRDQAYDFLLDWGISTGQSLIDMQHIDAPKIAYLASGGIRNPLDIVKSLALGADSVGMAGQIIYSLKKDGVSNTIEKLELWKEQLRGLFVLADAKNIAELKETSLIVNGKLAEWGNVRGIDLVQLANRK.

Residue 12–13 participates in substrate binding; that stretch reads RK. FMN-binding positions include 69 to 71, Ser99, and Asn128; that span reads AMT. Gln158 is a binding site for substrate. Glu159 contributes to the Mg(2+) binding site. FMN contacts are provided by residues Lys190, Thr220, 267-269, and 288-289; these read GIR and AG.

The protein belongs to the IPP isomerase type 2 family. In terms of assembly, homooctamer. Dimer of tetramers. Requires FMN as cofactor. The cofactor is NADPH. It depends on Mg(2+) as a cofactor.

The protein resides in the cytoplasm. The catalysed reaction is isopentenyl diphosphate = dimethylallyl diphosphate. In terms of biological role, involved in the biosynthesis of isoprenoids. Catalyzes the 1,3-allylic rearrangement of the homoallylic substrate isopentenyl (IPP) to its allylic isomer, dimethylallyl diphosphate (DMAPP). This chain is Isopentenyl-diphosphate delta-isomerase, found in Listeria welshimeri serovar 6b (strain ATCC 35897 / DSM 20650 / CCUG 15529 / CIP 8149 / NCTC 11857 / SLCC 5334 / V8).